We begin with the raw amino-acid sequence, 147 residues long: Hemoglobin subunit beta (147 aa).

A Globin domain is found at 3 to 147 (HWTPEEKQYI…VAHALALGYH (145 aa)). Heme b is bound by residues H64 and H93.

It belongs to the globin family. Heterotetramer of two alpha-D chains and two beta chains. Red blood cells.

Involved in oxygen transport from the lung to the various peripheral tissues. This chain is Hemoglobin subunit beta (HBB), found in Chelonoidis niger (Galapagos giant tortoise).